Here is a 263-residue protein sequence, read N- to C-terminus: Zinc transporter ZupT (263 aa).

Helical transmembrane passes span M1 to I21, L37 to F57, G68 to D88, M116 to F136, and T138 to I158. Fe(2+)-binding residues include N131 and E134. Position 134 (E134) interacts with Zn(2+). H159 is a binding site for Zn(2+). Fe(2+) contacts are provided by N160, E163, and E192. Position 163 (E163) interacts with Zn(2+). 3 helical membrane passes run W184–M204, F206–I226, and T243–I263.

This sequence belongs to the ZIP transporter (TC 2.A.5) family. ZupT subfamily.

It is found in the cell membrane. The enzyme catalyses Zn(2+)(in) = Zn(2+)(out). Functionally, mediates zinc uptake. May also transport other divalent cations. This Corynebacterium glutamicum (strain ATCC 13032 / DSM 20300 / JCM 1318 / BCRC 11384 / CCUG 27702 / LMG 3730 / NBRC 12168 / NCIMB 10025 / NRRL B-2784 / 534) protein is Zinc transporter ZupT.